The following is a 514-amino-acid chain: Peptide chain release factor 3 (514 aa).

In terms of domain architecture, tr-type G spans 8-268 (KKRRTFAIIS…TFLKFAPEPH (261 aa)). GTP-binding positions include 17 to 24 (SHPDAGKT), 85 to 89 (DTPGH), and 139 to 142 (NKLD).

The protein belongs to the TRAFAC class translation factor GTPase superfamily. Classic translation factor GTPase family. PrfC subfamily.

It localises to the cytoplasm. Increases the formation of ribosomal termination complexes and stimulates activities of RF-1 and RF-2. It binds guanine nucleotides and has strong preference for UGA stop codons. It may interact directly with the ribosome. The stimulation of RF-1 and RF-2 is significantly reduced by GTP and GDP, but not by GMP. This Streptococcus thermophilus (strain ATCC BAA-491 / LMD-9) protein is Peptide chain release factor 3.